The chain runs to 316 residues: tRNA dimethylallyltransferase (316 aa).

17-24 (GPTASGKT) is a binding site for ATP. 19–24 (TASGKT) provides a ligand contact to substrate. Interaction with substrate tRNA regions lie at residues 42-45 (DSAL), 166-170 (QRLSR), 247-252 (RCVGYR), and 280-287 (KRQITWLR).

The protein belongs to the IPP transferase family. In terms of assembly, monomer. Mg(2+) serves as cofactor.

The catalysed reaction is adenosine(37) in tRNA + dimethylallyl diphosphate = N(6)-dimethylallyladenosine(37) in tRNA + diphosphate. Functionally, catalyzes the transfer of a dimethylallyl group onto the adenine at position 37 in tRNAs that read codons beginning with uridine, leading to the formation of N6-(dimethylallyl)adenosine (i(6)A). In Escherichia coli O127:H6 (strain E2348/69 / EPEC), this protein is tRNA dimethylallyltransferase.